Here is a 454-residue protein sequence, read N- to C-terminus: UDP-N-acetylmuramoylalanine--D-glutamate ligase (454 aa).

117 to 123 (GTNGKTT) is an ATP binding site.

It belongs to the MurCDEF family.

Its subcellular location is the cytoplasm. The enzyme catalyses UDP-N-acetyl-alpha-D-muramoyl-L-alanine + D-glutamate + ATP = UDP-N-acetyl-alpha-D-muramoyl-L-alanyl-D-glutamate + ADP + phosphate + H(+). It participates in cell wall biogenesis; peptidoglycan biosynthesis. In terms of biological role, cell wall formation. Catalyzes the addition of glutamate to the nucleotide precursor UDP-N-acetylmuramoyl-L-alanine (UMA). The protein is UDP-N-acetylmuramoylalanine--D-glutamate ligase of Alkaliphilus oremlandii (strain OhILAs) (Clostridium oremlandii (strain OhILAs)).